Here is a 37-residue protein sequence, read N- to C-terminus: Photosystem I reaction center subunit VIII (37 aa).

Residues 7–27 (LPSIFVPLVGLVFPAIAMASL) traverse the membrane as a helical segment.

It belongs to the PsaI family.

It is found in the plastid. It localises to the chloroplast thylakoid membrane. Its function is as follows. May help in the organization of the PsaL subunit. This Populus alba (White poplar) protein is Photosystem I reaction center subunit VIII.